Consider the following 89-residue polypeptide: Small ribosomal subunit protein uS17 (89 aa).

Belongs to the universal ribosomal protein uS17 family. Part of the 30S ribosomal subunit.

In terms of biological role, one of the primary rRNA binding proteins, it binds specifically to the 5'-end of 16S ribosomal RNA. The chain is Small ribosomal subunit protein uS17 from Stenotrophomonas maltophilia (strain K279a).